Reading from the N-terminus, the 194-residue chain is Protein GrpE (194 aa).

The interval 1 to 44 (MAEEKQNEELNEQEELNETEAETAEAEQTAAEADAPAEETQTEM) is disordered. Residues 9–25 (ELNEQEELNETEAETAE) are compositionally biased toward acidic residues.

The protein belongs to the GrpE family. In terms of assembly, homodimer.

Its subcellular location is the cytoplasm. In terms of biological role, participates actively in the response to hyperosmotic and heat shock by preventing the aggregation of stress-denatured proteins, in association with DnaK and GrpE. It is the nucleotide exchange factor for DnaK and may function as a thermosensor. Unfolded proteins bind initially to DnaJ; upon interaction with the DnaJ-bound protein, DnaK hydrolyzes its bound ATP, resulting in the formation of a stable complex. GrpE releases ADP from DnaK; ATP binding to DnaK triggers the release of the substrate protein, thus completing the reaction cycle. Several rounds of ATP-dependent interactions between DnaJ, DnaK and GrpE are required for fully efficient folding. This is Protein GrpE from Bacillus licheniformis (strain ATCC 14580 / DSM 13 / JCM 2505 / CCUG 7422 / NBRC 12200 / NCIMB 9375 / NCTC 10341 / NRRL NRS-1264 / Gibson 46).